The following is a 508-amino-acid chain: Protein O-glucosyltransferase 3 (508 aa).

The signal sequence occupies residues 1–24 (MLGVRRALLLPPLQLALLVAAGTG). A Filamin repeat occupies 25 to 134 (ARVSAPRSLA…VAQSPYILKG (110 aa)). Asn-307 is a glycosylation site (N-linked (GlcNAc...) asparagine). Residues 480–508 (RDGMERVPQPDDSTSVRQCHRKRPEREEL) form a disordered region. A Prevents secretion from ER motif is present at residues 505–508 (REEL).

The protein belongs to the KDELC family.

The protein localises to the endoplasmic reticulum lumen. It carries out the reaction L-seryl-[EGF-like domain protein] + UDP-alpha-D-glucose = 3-O-(beta-D-glucosyl)-L-seryl-[EGF-like domain protein] + UDP + H(+). The catalysed reaction is L-seryl-[EGF-like domain protein] + UDP-alpha-D-xylose = 3-O-(beta-D-xylosyl)-L-seryl-[EGF-like domain protein] + UDP + H(+). Its pathway is protein modification; protein glycosylation. In terms of biological role, protein glucosyltransferase that catalyzes the transfer of glucose from UDP-glucose to a serine residue within the consensus sequence peptide C-X-N-T-X-G-S-F-X-C. Can also catalyze the transfer of xylose from UDP-xylose but less efficiently. Specifically targets extracellular EGF repeats of proteins such as NOTCH1, NOTCH3, FBN1, FBN2 and LTBP1. May regulate the transport of NOTCH1 and NOTCH3 to the plasma membrane and thereby the Notch signaling pathway. The chain is Protein O-glucosyltransferase 3 (Poglut3) from Rattus norvegicus (Rat).